A 2434-amino-acid chain; its full sequence is Protein Ycf2 (2434 aa).

Residue 1693–1700 participates in ATP binding; that stretch reads GPTETGRS.

This sequence belongs to the Ycf2 family.

It localises to the plastid. Its subcellular location is the chloroplast stroma. Functionally, probable ATPase of unknown function. Its presence in a non-photosynthetic plant (Epifagus virginiana) and experiments in tobacco indicate that it has an essential function which is probably not related to photosynthesis. The protein is Protein Ycf2 of Cycas taitungensis (Prince sago).